We begin with the raw amino-acid sequence, 432 residues long: Glutamate-1-semialdehyde 2,1-aminomutase 1 (432 aa).

N6-(pyridoxal phosphate)lysine is present on lysine 268.

Belongs to the class-III pyridoxal-phosphate-dependent aminotransferase family. HemL subfamily. As to quaternary structure, homodimer. Pyridoxal 5'-phosphate serves as cofactor.

It is found in the cytoplasm. It carries out the reaction (S)-4-amino-5-oxopentanoate = 5-aminolevulinate. It functions in the pathway porphyrin-containing compound metabolism; protoporphyrin-IX biosynthesis; 5-aminolevulinate from L-glutamyl-tRNA(Glu): step 2/2. This chain is Glutamate-1-semialdehyde 2,1-aminomutase 1, found in Bacillus cereus (strain ZK / E33L).